The chain runs to 264 residues: Apolipoprotein A-I (264 aa).

Residues 1-18 (MKAVVLAVAVLFLTGSQA) form the signal peptide. A run of 2 repeats spans residues 67-88 (LNLLENWDTLSSAFSKLREQLG) and 89-110 (HVSQEFWDTFEKDTAWLREEMN). The interval 67-264 (LNLLENWDTL…DQITKHVTTQ (198 aa)) is 10 X approximate tandem repeats. The residue at position 109 (methionine 109) is a Methionine sulfoxide. A 3; half-length repeat occupies 111 to 121 (KDLEKVKKKVQ). 3 consecutive repeat copies span residues 122–143 (PFLDSFQEKMQEEVKRYRHKVE), 144–165 (PLSLELRDGAHQQLKELQEKLG), and 166–187 (PLGKDLKDHALVHMDELRSHLR). Residues 188–207 (TYTEEMGQILAERLGAIKES) form a 7; truncated repeat. Residue methionine 193 is modified to Methionine sulfoxide. Repeat 8 spans residues 208–229 (TSLAEYQTKASEHLRTFSKKAK). Residues 230–240 (PILEDLRQGLL) form a 9; half-length repeat. Residues 241-264 (PVAENFKTNIKNTFDQITKHVTTQ) form repeat 10.

This sequence belongs to the apolipoprotein A1/A4/E family. Homodimer. Interacts with APOA1BP and CLU. Component of a sperm activating protein complex (SPAP), consisting of APOA1, an immunoglobulin heavy chain, an immunoglobulin light chain and albumin. Interacts with NDRG1. Interacts with SCGB3A2. Interacts with NAXE and YJEFN3. Post-translationally, glycosylated. In terms of processing, palmitoylated. Phosphorylation sites are present in the extracellular medium.

The protein localises to the secreted. Participates in the reverse transport of cholesterol from tissues to the liver for excretion by promoting cholesterol efflux from tissues and by acting as a cofactor for the lecithin cholesterol acyltransferase (LCAT). As part of the SPAP complex, activates spermatozoa motility. This Fukomys damarensis (Damaraland mole rat) protein is Apolipoprotein A-I (Apoa1).